Consider the following 123-residue polypeptide: Large ribosomal subunit protein bL12 (123 aa).

The protein belongs to the bacterial ribosomal protein bL12 family. As to quaternary structure, homodimer. Part of the ribosomal stalk of the 50S ribosomal subunit. Forms a multimeric L10(L12)X complex, where L10 forms an elongated spine to which 2 to 4 L12 dimers bind in a sequential fashion. Binds GTP-bound translation factors.

In terms of biological role, forms part of the ribosomal stalk which helps the ribosome interact with GTP-bound translation factors. Is thus essential for accurate translation. The polypeptide is Large ribosomal subunit protein bL12 (Cytophaga hutchinsonii (strain ATCC 33406 / DSM 1761 / CIP 103989 / NBRC 15051 / NCIMB 9469 / D465)).